The sequence spans 148 residues: MSEQQPKVIESKEIMTLLPHRYPFLLVDRVLDFKEGEWLKAIKNISVNEPCFTGHFPGEPILPGVLILEALAQAMGILAFKTHELKGGELFYFAGIDEARFKRPVLPGDQMELNVQVIKKRRGITAFTGVATVNGEIACEAKLMCARR.

The active site involves H55.

The protein belongs to the thioester dehydratase family. FabZ subfamily.

It localises to the cytoplasm. The catalysed reaction is a (3R)-hydroxyacyl-[ACP] = a (2E)-enoyl-[ACP] + H2O. Functionally, involved in unsaturated fatty acids biosynthesis. Catalyzes the dehydration of short chain beta-hydroxyacyl-ACPs and long chain saturated and unsaturated beta-hydroxyacyl-ACPs. This is 3-hydroxyacyl-[acyl-carrier-protein] dehydratase FabZ from Haemophilus influenzae (strain ATCC 51907 / DSM 11121 / KW20 / Rd).